Consider the following 364-residue polypeptide: Spermidine/putrescine import ATP-binding protein PotA (364 aa).

The region spanning 5-235 is the ABC transporter domain; sequence LSFKSVSKQY…PVNRFVADFI (231 aa). 37–44 is an ATP binding site; it reads GPSGCGKT.

The protein belongs to the ABC transporter superfamily. Spermidine/putrescine importer (TC 3.A.1.11.1) family. In terms of assembly, the complex is composed of two ATP-binding proteins (PotA), two transmembrane proteins (PotB and PotC) and a solute-binding protein (PotD).

Its subcellular location is the cell membrane. It carries out the reaction ATP + H2O + polyamine-[polyamine-binding protein]Side 1 = ADP + phosphate + polyamineSide 2 + [polyamine-binding protein]Side 1.. Its function is as follows. Part of the ABC transporter complex PotABCD involved in spermidine/putrescine import. Responsible for energy coupling to the transport system. The polypeptide is Spermidine/putrescine import ATP-binding protein PotA (Staphylococcus saprophyticus subsp. saprophyticus (strain ATCC 15305 / DSM 20229 / NCIMB 8711 / NCTC 7292 / S-41)).